A 109-amino-acid chain; its full sequence is Aquaporin-2 (109 aa).

Residues 1–6 lie on the Cytoplasmic side of the membrane; sequence SIAFSR. The helical transmembrane segment at 7-27 threads the bilayer; the sequence is AVFSEFLATLLFVFFGLGSAL. Topologically, residues 28–35 are extracellular; it reads NWPQALPS. A helical transmembrane segment spans residues 36–54; that stretch reads VLQIAMAFGLAIGTLVQAL. Residues 55-59 lie on the Cytoplasmic side of the membrane; sequence GHISG. The discontinuously helical intramembrane region spans 60-69; it reads AHINPAVTVA. The NPA 1 motif lies at 63 to 65; it reads NPA. Residues 70-80 lie on the Cytoplasmic side of the membrane; that stretch reads CLVGCHVSFLR. The chain crosses the membrane as a helical span at residues 81-102; that stretch reads ATFYLAAQLLGAVAGAAILHEI. Residues 103 to 109 lie on the Extracellular side of the membrane; sequence TPPDIRG.

This sequence belongs to the MIP/aquaporin (TC 1.A.8) family. Homotetramer. Serine phosphorylation is necessary and sufficient for expression at the apical membrane. Endocytosis is not phosphorylation-dependent. In terms of processing, N-glycosylated.

It localises to the apical cell membrane. The protein resides in the basolateral cell membrane. Its subcellular location is the cell membrane. It is found in the cytoplasmic vesicle membrane. The protein localises to the golgi apparatus. It localises to the trans-Golgi network membrane. The catalysed reaction is H2O(in) = H2O(out). The enzyme catalyses glycerol(in) = glycerol(out). Its function is as follows. Forms a water-specific channel that provides the plasma membranes of renal collecting duct with high permeability to water, thereby permitting water to move in the direction of an osmotic gradient. Plays an essential role in renal water homeostasis. Could also be permeable to glycerol. The protein is Aquaporin-2 of Dugong dugon (Dugong).